Here is a 423-residue protein sequence, read N- to C-terminus: Putative competence-damage inducible protein (423 aa).

The protein belongs to the CinA family.

In Streptococcus pyogenes serotype M18 (strain MGAS8232), this protein is Putative competence-damage inducible protein.